Reading from the N-terminus, the 376-residue chain is Protein-tyrosine sulfotransferase 2 (376 aa).

Residues 1-8 (MRLSVRKV) are Cytoplasmic-facing. The chain crosses the membrane as a helical; Signal-anchor for type II membrane protein span at residues 9–25 (LLAAGCALALVLAVQLG). The Lumenal segment spans residues 26-376 (QQVLECRAVL…NSTSPHLGSS (351 aa)). Residue 77 to 81 (RSGTT) participates in 3'-phosphoadenylyl sulfate binding. C95 and C155 are joined by a disulfide. E98 acts as the Proton donor/acceptor in catalysis. Positions 100-104 (RIIPR) are interaction with peptide substrate. 3 residues coordinate 3'-phosphoadenylyl sulfate: R182, S190, and R194. An intrachain disulfide couples C224 to C232. Residues Y237, 284-293 (STDQVIKPVN), and K299 contribute to the 3'-phosphoadenylyl sulfate site. N-linked (GlcNAc...) asparagine glycans are attached at residues N342 and N367.

This sequence belongs to the protein sulfotransferase family. As to quaternary structure, homodimer. Can also form heterodimers with TPST1. In terms of processing, N-glycosylated. Widely expressed.

Its subcellular location is the golgi apparatus membrane. The enzyme catalyses L-tyrosyl-[protein] + 3'-phosphoadenylyl sulfate = O-sulfo-L-tyrosine-[protein] + adenosine 3',5'-bisphosphate + H(+). Its function is as follows. Catalyzes the O-sulfation of tyrosine residues within acidic motifs of polypeptides, using 3'-phosphoadenylyl sulfate (PAPS) as cosubstrate. The protein is Protein-tyrosine sulfotransferase 2 (Tpst2) of Mus musculus (Mouse).